The primary structure comprises 471 residues: tRNA(Ile)-lysidine synthase (471 aa).

Residue 35 to 40 participates in ATP binding; sequence SGGADS.

It belongs to the tRNA(Ile)-lysidine synthase family.

Its subcellular location is the cytoplasm. It carries out the reaction cytidine(34) in tRNA(Ile2) + L-lysine + ATP = lysidine(34) in tRNA(Ile2) + AMP + diphosphate + H(+). Functionally, ligates lysine onto the cytidine present at position 34 of the AUA codon-specific tRNA(Ile) that contains the anticodon CAU, in an ATP-dependent manner. Cytidine is converted to lysidine, thus changing the amino acid specificity of the tRNA from methionine to isoleucine. This Geobacter sulfurreducens (strain ATCC 51573 / DSM 12127 / PCA) protein is tRNA(Ile)-lysidine synthase.